The primary structure comprises 150 residues: MADNDAIKVHDLRPAPGAKTAKTRVGRGEASKGKTAGRGTKGTKARYQVRAGFEGGQLPLQMRLPKLRGFKNPFRTEYQVVNLDKLSAHFPEGGEVTVDALVSKGLVRRGQPVKVLGTGEITAAVQVKANAFSASAVEKIQAAGGSTETL.

A compositionally biased stretch (basic and acidic residues) spans 1-13 (MADNDAIKVHDLR). The tract at residues 1-44 (MADNDAIKVHDLRPAPGAKTAKTRVGRGEASKGKTAGRGTKGTK) is disordered.

It belongs to the universal ribosomal protein uL15 family. In terms of assembly, part of the 50S ribosomal subunit.

Binds to the 23S rRNA. In Micrococcus luteus (strain ATCC 4698 / DSM 20030 / JCM 1464 / CCM 169 / CCUG 5858 / IAM 1056 / NBRC 3333 / NCIMB 9278 / NCTC 2665 / VKM Ac-2230) (Micrococcus lysodeikticus), this protein is Large ribosomal subunit protein uL15.